The following is a 216-amino-acid chain: Protein-L-isoaspartate O-methyltransferase (216 aa).

Serine 65 is an active-site residue.

Belongs to the methyltransferase superfamily. L-isoaspartyl/D-aspartyl protein methyltransferase family.

It localises to the cytoplasm. The catalysed reaction is [protein]-L-isoaspartate + S-adenosyl-L-methionine = [protein]-L-isoaspartate alpha-methyl ester + S-adenosyl-L-homocysteine. Functionally, catalyzes the methyl esterification of L-isoaspartyl residues in peptides and proteins that result from spontaneous decomposition of normal L-aspartyl and L-asparaginyl residues. It plays a role in the repair and/or degradation of damaged proteins. The protein is Protein-L-isoaspartate O-methyltransferase of Chlorobium phaeobacteroides (strain DSM 266 / SMG 266 / 2430).